The sequence spans 252 residues: tRNA (guanine-N(7)-)-methyltransferase (252 aa).

S-adenosyl-L-methionine-binding residues include glutamate 75, glutamate 100, aspartate 127, and aspartate 150. Aspartate 150 is an active-site residue. Position 154 (lysine 154) interacts with substrate. The interaction with RNA stretch occupies residues 156-161; the sequence is RHNKRR. Residues aspartate 186 and 223 to 226 contribute to the substrate site; that span reads THFE.

This sequence belongs to the class I-like SAM-binding methyltransferase superfamily. TrmB family.

The catalysed reaction is guanosine(46) in tRNA + S-adenosyl-L-methionine = N(7)-methylguanosine(46) in tRNA + S-adenosyl-L-homocysteine. It participates in tRNA modification; N(7)-methylguanine-tRNA biosynthesis. Functionally, catalyzes the formation of N(7)-methylguanine at position 46 (m7G46) in tRNA. This is tRNA (guanine-N(7)-)-methyltransferase from Xanthomonas oryzae pv. oryzae (strain MAFF 311018).